The primary structure comprises 115 residues: Large ribosomal subunit protein bL19 (115 aa).

It belongs to the bacterial ribosomal protein bL19 family.

Functionally, this protein is located at the 30S-50S ribosomal subunit interface and may play a role in the structure and function of the aminoacyl-tRNA binding site. The chain is Large ribosomal subunit protein bL19 from Shouchella clausii (strain KSM-K16) (Alkalihalobacillus clausii).